The primary structure comprises 209 residues: Ribosomal RNA large subunit methyltransferase E (209 aa).

S-adenosyl-L-methionine is bound by residues Gly-63, Trp-65, Asp-83, Asp-99, and Asp-124. Lys-164 functions as the Proton acceptor in the catalytic mechanism.

It belongs to the class I-like SAM-binding methyltransferase superfamily. RNA methyltransferase RlmE family.

It localises to the cytoplasm. The catalysed reaction is uridine(2552) in 23S rRNA + S-adenosyl-L-methionine = 2'-O-methyluridine(2552) in 23S rRNA + S-adenosyl-L-homocysteine + H(+). Functionally, specifically methylates the uridine in position 2552 of 23S rRNA at the 2'-O position of the ribose in the fully assembled 50S ribosomal subunit. In Shewanella frigidimarina (strain NCIMB 400), this protein is Ribosomal RNA large subunit methyltransferase E.